The sequence spans 309 residues: Uridylate-specific endoribonuclease C (309 aa).

Positions 1 to 22 (MASGYDFGWIPVLLSLFTLTDA) are cleaved as a signal peptide. The 277-residue stretch at 27–303 (VNQELSNIFN…IGTAYPKLLS (277 aa)) folds into the EndoU domain. 2 N-linked (GlcNAc...) asparagine glycosylation sites follow: N53 and N121. Active-site residues include H181, H197, and K242.

Belongs to the ENDOU family. As to quaternary structure, monomer. Requires Mn(2+) as cofactor.

The protein resides in the secreted. The enzyme catalyses ribonucleotidyl-uridine-RNA = a 5'-end dephospho-uridine-RNA + a 3'-end 2',3'-cyclophospho-ribonucleotide-RNA. Its function is as follows. Endoribonuclease that cleaves single-stranded RNAs at 5' of uridylates and releases a product with a 2',3'-cyclic phosphate at the 3'-end. The UU and GU sites are more efficiently cleaved than CU and AU sites. The polypeptide is Uridylate-specific endoribonuclease C (endouc) (Danio rerio (Zebrafish)).